A 221-amino-acid polypeptide reads, in one-letter code: Catechol O-methyltransferase (221 aa).

S-adenosyl-L-methionine is bound by residues valine 41, glycine 65, leucine 67, serine 71, glutamate 89, histidine 94, alanine 118, and aspartate 139. Residues aspartate 139, aspartate 165, and asparagine 166 each coordinate Mg(2+).

It belongs to the class I-like SAM-binding methyltransferase superfamily. Cation-dependent O-methyltransferase family. In terms of assembly, homodimer. Requires Mg(2+) as cofactor.

It catalyses the reaction a catechol + S-adenosyl-L-methionine = a guaiacol + S-adenosyl-L-homocysteine + H(+). The metal ion affects the meta and para-regiospecificity of the enzyme as well as the enzyme activity and thermal stability. Its function is as follows. Catechol O-methyltransferase that can use various catechol-like compounds. Can produce vanillic acid (meta-form) and iso-vanillic acid (para-form) from protocatechuic acid (PCA). Does not have a regiospecificity, and produces the meta- and para-forms of the products in equal proportion. The chain is Catechol O-methyltransferase from Niastella koreensis (strain DSM 17620 / KACC 11465 / NBRC 106392 / GR20-10).